The sequence spans 49 residues: Large ribosomal subunit protein bL32 (49 aa).

The disordered stretch occupies residues 25–49 (AKPVKDKDGTYKLPHHINPTTGEYK).

It belongs to the bacterial ribosomal protein bL32 family.

The polypeptide is Large ribosomal subunit protein bL32 (Sulfurimonas denitrificans (strain ATCC 33889 / DSM 1251) (Thiomicrospira denitrificans (strain ATCC 33889 / DSM 1251))).